The sequence spans 674 residues: Sodium/myo-inositol cotransporter 2 (674 aa).

At 1–27 (MESSTSSPQPPLSDPLDPFPQRSLEPG) the chain is on the extracellular side. The helical transmembrane segment at 28-48 (DIAVLVLYFLFVLAVGLWSTV) threads the bilayer. Residues 49-56 (KTKRDTVK) lie on the Cytoplasmic side of the membrane. Residues 57–77 (GYFLAGGDMVWWPVGASLFAS) traverse the membrane as a helical segment. The Extracellular portion of the chain corresponds to 78-102 (NVGSGHFVGLAGSGAATGISVAAYE). A helical membrane pass occupies residues 103–123 (FNGMFSVLMLAWIFLPIYIAG). At 124–140 (QVTTMPEYLRRRFGGSR) the chain is on the cytoplasmic side. The helical transmembrane segment at 141–161 (IAITLAVLYLFIYIFTKISVD) threads the bilayer. The Extracellular portion of the chain corresponds to 162–180 (MYAGAIFIQQSLHLDLYLS). The chain crosses the membrane as a helical span at residues 181–201 (VVGLLAVTALYTVAGGLAAVI). Over 202-208 (YTDALQT) the chain is Cytoplasmic. A helical transmembrane segment spans residues 209–229 (LIMLVGALTLMGYSFAAVGGM). Residues 230–272 (EGLQEKYFLALPSNRSENSSCGLPREDAFHLFRDPLTSDLPWP) lie on the Extracellular side of the membrane. The chain crosses the membrane as a helical span at residues 273 to 293 (GILFGMSIPSLWYWCTDQVIV). Topologically, residues 294-308 (QRSLAAKNLSHAKGG) are cytoplasmic. Residues 309–329 (SLMAAYLKVLPLFIMVFPGMV) form a helical membrane-spanning segment. The Extracellular portion of the chain corresponds to 330-375 (SRILFPDQVACADPETCQRVCNNPSGCSDIAYPKLVLELLPTGLRG). Residues 376–396 (LMMAVMVAALMSSLTSIFNSA) form a helical membrane-spanning segment. At 397–418 (STIFTMDLWNHVRPRASEKELM) the chain is on the cytoplasmic side. Residues 419 to 439 (IVGRVFVLLLVLVSVLWIPVV) form a helical membrane-spanning segment. Residues 440–446 (QASQGGQ) are Extracellular-facing. Residues 447–467 (LFVYIQAISSYLQPPVAMVFV) traverse the membrane as a helical segment. Over 468 to 479 (LGCFWKRANEKG) the chain is Cytoplasmic. The chain crosses the membrane as a helical span at residues 480-500 (AFWGLVLGLLLGFIRLILDFI). The Extracellular segment spans residues 501 to 521 (YVEPACHQPDERPSVVKNVHY). Residues 522-542 (LYFSMILSSVTVLTVTVMSLL) form a helical membrane-spanning segment. Residues 543–653 (TEPPSKEMIS…SIEENPVVKT (111 aa)) are Cytoplasmic-facing. Residues 654–674 (LLDVNCLLCICCAFFLWGYFA) traverse the membrane as a helical segment.

It belongs to the sodium:solute symporter (SSF) (TC 2.A.21) family. As to expression, expressed in brain, lung and kidney. In the kidney, strongly expressed in the cortex, at the luminal side of proximal convoluted tubules and in BBMVs. Weaker expression observed in the medulla (at protein level).

It localises to the membrane. Its subcellular location is the apical cell membrane. The catalysed reaction is myo-inositol(out) + 2 Na(+)(out) = myo-inositol(in) + 2 Na(+)(in). The enzyme catalyses 1D-chiro-inositol(out) + 2 Na(+)(out) = 1D-chiro-inositol(in) + 2 Na(+)(in). It catalyses the reaction D-glucose(out) + 2 Na(+)(out) = D-glucose(in) + 2 Na(+)(in). It carries out the reaction D-xylose(out) + 2 Na(+)(out) = D-xylose(in) + 2 Na(+)(in). MI transport activity stimulated five-fold under 24 hour hypertonic shock conditions. MI inward currents were gradually inhibited as increasing amounts of phlorizin were added to the superfusion medium. When sodium is replaced by potassium, MI uptake is dramatically reduced and in the presence of L-fucose or D-chiro-inositol (DCI), the specific accumulation of tracer amounts of MI is also reduced. In terms of biological role, involved in the sodium-dependent cotransport of myo-inositol (MI) with a Na(+):MI stoichiometry of 2:1. Exclusively responsible for apical MI transport and absorption in intestine. Can also transport D-chiro-inositol (DCI) but not L-fucose. Exhibits stereospecific cotransport of both D-glucose and D-xylose. May induce apoptosis through the TNF-alpha, PDCD1 pathway. May play a role in the regulation of MI concentration in serum, involving reabsorption in at least the proximal tubule of the kidney. The polypeptide is Sodium/myo-inositol cotransporter 2 (Oryctolagus cuniculus (Rabbit)).